The chain runs to 93 residues: MASGQQERSQLDRKAREGETVVPGGTGGKSLEAQENLAEGRSRGGQTRREQMGEEGYSQMGRKGGLSTNDESGGDRAAREGIDIDESKFKTKS.

Positions 1–93 (MASGQQERSQ…IDESKFKTKS (93 aa)) are disordered. Basic and acidic residues-rich tracts occupy residues 9 to 19 (SQLDRKAREGE), 38 to 52 (AEGR…REQM), and 73 to 93 (GGDR…KTKS).

The protein belongs to the small hydrophilic plant seed protein family.

It is thought to provide protection for the cytoplasm during the desiccation stage of embryo development. The chain is Em protein (EM) from Triticum aestivum (Wheat).